A 383-amino-acid chain; its full sequence is F-box/kelch-repeat protein At2g22030 (383 aa).

In terms of domain architecture, F-box spans 23–71 (SLLFSSLPYDVVLNCLARVSRRYYPNLSCVSKSFQSLVRSPELAHMRSL). Kelch repeat units lie at residues 130-175 (KIYF…VVNG), 176-220 (KLYV…LMRY), and 269-317 (GVCV…GMVD).

The protein is F-box/kelch-repeat protein At2g22030 of Arabidopsis thaliana (Mouse-ear cress).